The following is a 213-amino-acid chain: Thiamine-phosphate synthase (213 aa).

4-amino-2-methyl-5-(diphosphooxymethyl)pyrimidine contacts are provided by residues 39–43 (QLREK) and Asn-71. The Mg(2+) site is built by Asp-72 and Asp-91. Position 110 (Ser-110) interacts with 4-amino-2-methyl-5-(diphosphooxymethyl)pyrimidine. 136 to 138 (TGT) is a binding site for 2-[(2R,5Z)-2-carboxy-4-methylthiazol-5(2H)-ylidene]ethyl phosphate. Residue Lys-139 coordinates 4-amino-2-methyl-5-(diphosphooxymethyl)pyrimidine. 2-[(2R,5Z)-2-carboxy-4-methylthiazol-5(2H)-ylidene]ethyl phosphate is bound by residues Gly-166 and 186–187 (VS).

It belongs to the thiamine-phosphate synthase family. The cofactor is Mg(2+).

It catalyses the reaction 2-[(2R,5Z)-2-carboxy-4-methylthiazol-5(2H)-ylidene]ethyl phosphate + 4-amino-2-methyl-5-(diphosphooxymethyl)pyrimidine + 2 H(+) = thiamine phosphate + CO2 + diphosphate. It carries out the reaction 2-(2-carboxy-4-methylthiazol-5-yl)ethyl phosphate + 4-amino-2-methyl-5-(diphosphooxymethyl)pyrimidine + 2 H(+) = thiamine phosphate + CO2 + diphosphate. The catalysed reaction is 4-methyl-5-(2-phosphooxyethyl)-thiazole + 4-amino-2-methyl-5-(diphosphooxymethyl)pyrimidine + H(+) = thiamine phosphate + diphosphate. It functions in the pathway cofactor biosynthesis; thiamine diphosphate biosynthesis; thiamine phosphate from 4-amino-2-methyl-5-diphosphomethylpyrimidine and 4-methyl-5-(2-phosphoethyl)-thiazole: step 1/1. Functionally, condenses 4-methyl-5-(beta-hydroxyethyl)thiazole monophosphate (THZ-P) and 2-methyl-4-amino-5-hydroxymethyl pyrimidine pyrophosphate (HMP-PP) to form thiamine monophosphate (TMP). The protein is Thiamine-phosphate synthase of Clostridium botulinum (strain Eklund 17B / Type B).